Consider the following 639-residue polypeptide: ATP-dependent zinc metalloprotease FtsH (639 aa).

The Cytoplasmic portion of the chain corresponds to 1-20 (MNGNNNMNNNGKSNNKKKNK). A helical membrane pass occupies residues 21 to 41 (NWILGLVVVFLISAIFMSYFI). Over 42-120 (RGGESYKNVP…LSSGKSQASL (79 aa)) the chain is Periplasmic. The chain crosses the membrane as a helical span at residues 121-141 (IGVLLQTLPWILFFIFFFFIF). At 142–639 (RQTQGGGGKV…KEVKGEDVKG (498 aa)) the chain is on the cytoplasmic side. 212–219 (GSPGTGKT) is a binding site for ATP. A Zn(2+)-binding site is contributed by histidine 434. Glutamate 435 is an active-site residue. The Zn(2+) site is built by histidine 438 and aspartate 510.

The protein in the central section; belongs to the AAA ATPase family. It in the C-terminal section; belongs to the peptidase M41 family. In terms of assembly, homohexamer. Zn(2+) is required as a cofactor.

Its subcellular location is the cell inner membrane. Its function is as follows. Acts as a processive, ATP-dependent zinc metallopeptidase for both cytoplasmic and membrane proteins. Plays a role in the quality control of integral membrane proteins. This chain is ATP-dependent zinc metalloprotease FtsH, found in Borreliella burgdorferi (strain ZS7) (Borrelia burgdorferi).